The sequence spans 257 residues: Small ribosomal subunit protein eS1 (257 aa).

The tract at residues 237-257 (GADGEKVDRPDDYEPPVQQEV) is disordered. Residues 239–248 (DGEKVDRPDD) are compositionally biased toward basic and acidic residues.

It belongs to the eukaryotic ribosomal protein eS1 family. Component of the small ribosomal subunit. Mature ribosomes consist of a small (40S) and a large (60S) subunit. The 40S subunit contains about 33 different proteins and 1 molecule of RNA (18S). The 60S subunit contains about 49 different proteins and 3 molecules of RNA (28S, 5.8S and 5S).

It localises to the cytoplasm. This chain is Small ribosomal subunit protein eS1, found in Caenorhabditis elegans.